The chain runs to 245 residues: Proteolipid protein DM alpha (245 aa).

Helical transmembrane passes span 19–35 (LIATILCFVGVALFCGC), 71–87 (IIYGTASFSFLYGVLLL), 117–133 (FIFLTYALGVTWMGVFA), and 204–220 (LFIATFAGAAATVIALL).

It belongs to the myelin proteolipid protein family. As to expression, highly expressed in white matter in myelinating shark brain.

Its subcellular location is the membrane. In Squalus acanthias (Spiny dogfish), this protein is Proteolipid protein DM alpha.